The primary structure comprises 119 residues: Chymotrypsin inhibitor WCI (119 aa).

5 cysteine pairs are disulfide-bonded: C6-C55, C20-C44, C29-C87, C45-C105, and C57-C116.

The protein localises to the secreted. In terms of biological role, inhibits bovine, insect and wheat chymotrypsins. Inhibits bovine chymotrypsin with Ki of 0.6 nM. Does not inhibit human or wheat alpha-amylases, bovine pancreatic trypsin, or trypsin-like activity isolated from wheat. This is Chymotrypsin inhibitor WCI from Triticum aestivum (Wheat).